Here is a 247-residue protein sequence, read N- to C-terminus: Type III pantothenate kinase (247 aa).

6–13 (DVGNTHTT) provides a ligand contact to ATP. 101-104 (GADR) provides a ligand contact to substrate. D103 acts as the Proton acceptor in catalysis. K(+) is bound at residue D123. T126 contributes to the ATP binding site. T177 provides a ligand contact to substrate.

This sequence belongs to the type III pantothenate kinase family. Homodimer. Requires NH4(+) as cofactor. It depends on K(+) as a cofactor.

The protein resides in the cytoplasm. It catalyses the reaction (R)-pantothenate + ATP = (R)-4'-phosphopantothenate + ADP + H(+). It participates in cofactor biosynthesis; coenzyme A biosynthesis; CoA from (R)-pantothenate: step 1/5. Its function is as follows. Catalyzes the phosphorylation of pantothenate (Pan), the first step in CoA biosynthesis. The polypeptide is Type III pantothenate kinase (Thermosipho melanesiensis (strain DSM 12029 / CIP 104789 / BI429)).